A 314-amino-acid polypeptide reads, in one-letter code: MELNHLVTGKIALNQYVHRLEQKDVSFYVHYWGAMTNHYNTLLHKHSFYEICYVVRGEGYYLEGDRTYPLREQTIFLSKPEHLHQIKSETGLFLFYVAFELSEDQSSAEWIKVMEEVKQSPFITMQLKDGEPPGLLWKTLMLQAAQPVNAFDKEILSHLSHALILSLIQTFLPYAQRPKQKQPIHTSSALLTEVKLHIKDNLSQPLKLTDVASHFHISGRHLSRLFAAELGVSYSEFVQNEKINKAAELLKSTNLSIKEIAEEIGFSVHYFTRVFSAKIGSSPGLFRSLYKDSKMTAFQINKPFQKIEQAKPHE.

The 98-residue stretch at 192–289 (TEVKLHIKDN…GSSPGLFRSL (98 aa)) folds into the HTH araC/xylS-type domain. 2 consecutive DNA-binding regions (H-T-H motif) follow at residues 209-230 (TDVASHFHISGRHLSRLFAAEL) and 257-279 (IKEIAEEIGFSVHYFTRVFSAKI).

This is an uncharacterized protein from Bacillus subtilis (strain 168).